The primary structure comprises 246 residues: 2-C-methyl-D-erythritol 4-phosphate cytidylyltransferase (246 aa).

This sequence belongs to the IspD/TarI cytidylyltransferase family. IspD subfamily.

The catalysed reaction is 2-C-methyl-D-erythritol 4-phosphate + CTP + H(+) = 4-CDP-2-C-methyl-D-erythritol + diphosphate. The protein operates within isoprenoid biosynthesis; isopentenyl diphosphate biosynthesis via DXP pathway; isopentenyl diphosphate from 1-deoxy-D-xylulose 5-phosphate: step 2/6. In terms of biological role, catalyzes the formation of 4-diphosphocytidyl-2-C-methyl-D-erythritol from CTP and 2-C-methyl-D-erythritol 4-phosphate (MEP). In Chlorobaculum parvum (strain DSM 263 / NCIMB 8327) (Chlorobium vibrioforme subsp. thiosulfatophilum), this protein is 2-C-methyl-D-erythritol 4-phosphate cytidylyltransferase.